We begin with the raw amino-acid sequence, 591 residues long: Aspartate--tRNA(Asp/Asn) ligase (591 aa).

Position 174 (glutamate 174) interacts with L-aspartate. The aspartate stretch occupies residues 198–201; that stretch reads QLFK. Position 220 (arginine 220) interacts with L-aspartate. Residues 220-222 and glutamine 229 contribute to the ATP site; that span reads RDE. Histidine 450 is a binding site for L-aspartate. Glutamate 483 serves as a coordination point for ATP. Arginine 490 serves as a coordination point for L-aspartate. 535 to 538 is an ATP binding site; sequence GLDR.

Belongs to the class-II aminoacyl-tRNA synthetase family. Type 1 subfamily. Homodimer.

It localises to the cytoplasm. It carries out the reaction tRNA(Asx) + L-aspartate + ATP = L-aspartyl-tRNA(Asx) + AMP + diphosphate. In terms of biological role, aspartyl-tRNA synthetase with relaxed tRNA specificity since it is able to aspartylate not only its cognate tRNA(Asp) but also tRNA(Asn). Reaction proceeds in two steps: L-aspartate is first activated by ATP to form Asp-AMP and then transferred to the acceptor end of tRNA(Asp/Asn). This Pseudomonas fluorescens (strain ATCC BAA-477 / NRRL B-23932 / Pf-5) protein is Aspartate--tRNA(Asp/Asn) ligase.